The sequence spans 2513 residues: Highly reducing polyketide synthase ACRTS2 (2513 aa).

Residues 4–429 (DTPVAIIGVS…GSSSAVIIDR (426 aa)) form the Ketosynthase family 3 (KS3) domain. Active-site for beta-ketoacyl synthase activity residues include Cys174, His313, and His353. The malonyl-CoA:ACP transacylase (MAT) domain stretch occupies residues 547-875 (VFTGQGAQYA…NYLPSLLRGT (329 aa)). Catalysis depends on Ser635, which acts as the For malonyltransferase activity. Positions 942-1074 (HALIGRKAPS…GKIEPEIADL (133 aa)) are N-terminal hotdog fold. A dehydratase (DH) domain region spans residues 942-1253 (HALIGRKAPS…TFRTVSSADD (312 aa)). Residues 942-1254 (HALIGRKAPS…FRTVSSADDQ (313 aa)) enclose the PKS/mFAS DH domain. His974 functions as the Proton acceptor; for dehydratase activity in the catalytic mechanism. Positions 1092–1254 (AGVIEHDMDN…FRTVSSADDQ (163 aa)) are C-terminal hotdog fold. The active-site Proton donor; for dehydratase activity is the Asp1161. The tract at residues 1407–1600 (SKIIGYLTEN…IPTNYRTDNP (194 aa)) is methyltransferase (CMet) domain. Residues 1816–2127 (GSPDTIYFRR…SRDHIGRLVV (312 aa)) form an enoylreductase (ER) domain region. Residues 2152–2327 (ATYLVAGGTR…YTVSIGLPVV (176 aa)) are ketoreductase (KR) domain. The Carrier domain maps to 2433–2510 (DPLTGLIEAL…ALAVNILAQR (78 aa)). Ser2470 is subject to O-(pantetheine 4'-phosphoryl)serine.

It participates in mycotoxin biosynthesis. In terms of biological role, highly reducing polyketide synthase; part of the gene cluster that mediates the biosynthesis of the host-selective toxins (HSTs) ACR-toxins responsible for brown spot of rough lemon disease by the rough lemon pathotype. ACR-toxins cause uncoupling of mitochondrial oxidative-phosphorylation similar to that of classic protonophore. The structure of the major form of ACR-toxin (ACR-toxin I) consists of an alpha-dihydropyrone ring in a 19-carbon polyalcohol, a typical polyketide structure. Minor toxins were characterized as having a pyrone ring with polyalcohol side chains different in length and showing weaker toxicity. The highly reducing polyketide synthase ACRTS2 has all necessary enzymatic domains for multiple cycles of condensation and beta-keto processing. The cytochrome P450 monooxygenase ACRTS1 has also been shown to be essential for ACR-toxin biosynthesis, however its exact role in the pathway has not been elucidated yet. This Alternaria alternata (Alternaria rot fungus) protein is Highly reducing polyketide synthase ACRTS2.